A 450-amino-acid polypeptide reads, in one-letter code: Tubulin alpha chain, testis-specific (450 aa).

The MREC motif signature appears at 1 to 4 (MREC). Residue Q11 coordinates GTP. Residue K40 is modified to N6-acetyllysine. The GTP site is built by E71, S140, G144, T145, T179, N206, and N228. A Mg(2+)-binding site is contributed by E71. E254 is a catalytic residue.

It belongs to the tubulin family. Dimer of alpha and beta chains. A typical microtubule is a hollow water-filled tube with an outer diameter of 25 nm and an inner diameter of 15 nM. Alpha-beta heterodimers associate head-to-tail to form protofilaments running lengthwise along the microtubule wall with the beta-tubulin subunit facing the microtubule plus end conferring a structural polarity. Microtubules usually have 13 protofilaments but different protofilament numbers can be found in some organisms and specialized cells. Mg(2+) is required as a cofactor. In terms of processing, some glutamate residues at the C-terminus are polyglycylated, resulting in polyglycine chains on the gamma-carboxyl group. Glycylation is mainly limited to tubulin incorporated into axonemes (cilia and flagella) whereas glutamylation is prevalent in neuronal cells, centrioles, axonemes, and the mitotic spindle. Both modifications can coexist on the same protein on adjacent residues, and lowering polyglycylation levels increases polyglutamylation, and reciprocally. The precise function of polyglycylation is still unclear. Post-translationally, some glutamate residues at the C-terminus are polyglutamylated, resulting in polyglutamate chains on the gamma-carboxyl group. Polyglutamylation plays a key role in microtubule severing by spastin (SPAST). SPAST preferentially recognizes and acts on microtubules decorated with short polyglutamate tails: severing activity by SPAST increases as the number of glutamates per tubulin rises from one to eight, but decreases beyond this glutamylation threshold. Acetylation of alpha chains at Lys-40 is located inside the microtubule lumen. This modification has been correlated with increased microtubule stability, intracellular transport and ciliary assembly. In terms of processing, undergoes a tyrosination/detyrosination cycle, the cyclic removal and re-addition of a C-terminal tyrosine residue by the enzymes tubulin tyrosine carboxypeptidase (MATCAP, VASH1 or VASH2) and tubulin tyrosine ligase (TTL), respectively. Post-translationally, tyrosination promotes microtubule interaction with CAP-Gly microtubule plus-end tracking proteins. Tyrosinated tubulins regulate the initiation of dynein-driven motility. Detyrosination is involved in metaphase plate congression by guiding chromosomes during mitosis. Detyrosination increases microtubules-dependent mechanotransduction in dystrophic cardiac and skeletal muscle. In cardiomyocytes, detyrosinated microtubules are required to resist to contractile compression during contraction. As to expression, testis specific.

It is found in the cytoplasm. Its subcellular location is the cytoskeleton. The catalysed reaction is GTP + H2O = GDP + phosphate + H(+). In terms of biological role, tubulin is the major constituent of microtubules, a cylinder consisting of laterally associated linear protofilaments composed of alpha- and beta-tubulin heterodimers. Microtubules grow by the addition of GTP-tubulin dimers to the microtubule end, where a stabilizing cap forms. Below the cap, tubulin dimers are in GDP-bound state, owing to GTPase activity of alpha-tubulin. The protein is Tubulin alpha chain, testis-specific of Oncorhynchus mykiss (Rainbow trout).